The following is a 111-amino-acid chain: Protein RnfH (111 aa).

Residues 88-111 (RRRRVQKTRESGTREGQKWLRGGA) form a disordered region. Over residues 94 to 105 (KTRESGTREGQK) the composition is skewed to basic and acidic residues.

The protein belongs to the UPF0125 (RnfH) family.

In Cupriavidus pinatubonensis (strain JMP 134 / LMG 1197) (Cupriavidus necator (strain JMP 134)), this protein is Protein RnfH.